The following is a 162-amino-acid chain: Thy-1 membrane glycoprotein (162 aa).

Residues 1–19 (MNPAISVALLLSVLQVSRG) form the signal peptide. Gln-20 is subject to Pyrrolidone carboxylic acid. In terms of domain architecture, Ig-like V-type spans 20-127 (QKVTSLTACL…NKSISVYRDK (108 aa)). 2 disulfide bridges follow: Cys-28–Cys-131 and Cys-38–Cys-105. N-linked (GlcNAc...) asparagine glycosylation is found at Asn-42, Asn-94, and Asn-118. Cys-131 is lipidated: GPI-anchor amidated cysteine; alternate. The propeptide at 132–162 (GGISLLVQNTSWMLLLLLSLSLLQALDFISL) is removed in mature form.

The protein localises to the cell membrane. Its function is as follows. May play a role in cell-cell or cell-ligand interactions during synaptogenesis and other events in the brain. The chain is Thy-1 membrane glycoprotein (Thy1) from Mus musculus (Mouse).